Here is a 76-residue protein sequence, read N- to C-terminus: Large ribosomal subunit protein bL31 (76 aa).

It belongs to the bacterial ribosomal protein bL31 family. Type A subfamily. In terms of assembly, part of the 50S ribosomal subunit.

Binds the 23S rRNA. This chain is Large ribosomal subunit protein bL31, found in Methylocella silvestris (strain DSM 15510 / CIP 108128 / LMG 27833 / NCIMB 13906 / BL2).